We begin with the raw amino-acid sequence, 611 residues long: MSKIIGIDLGTTNSCVAVMEGGEPKVIPNPEGNRTTPSVVAFKNEERQVGEVAKRQAITNPNTIMSVKRHMGTDYKVEVEGKDYTPQEISAIILQNLKASAEAYLGETVTKAVITVPAYFNDAERQATKDAGRIAGLEVERIINEPTAAALAYGLEKQDEEQKILVYDLGGGTFDVSILELADGTFEVISTAGDNRLGGDDFDQVIIDHLVAEFKKENNIDLSQDKMALQRLKDAAEKAKKDLSGVTQTQISLPFISAGAAGPLHLELTLTRAKFEELSAGLVERTLEPTRRALKDAGFAPSELDKVILVGGSTRIPAVQEAIKRETGKEPYKGVNPDEVVALGAAVQGGVLTGDVEGVLLLDVTPLSLGIETMGGVFTKLIERNTTIPTSKSQVFSTAADNQPAVDIHVLQGERPMSADNKTLGRFQLTDLPPAPRGIPQIEVTFDIDANGIVNVRAKDLGTSKEQAITIQSSSGLSDEEVERMVQEAEANADADQKRKEEVELRNEADQLVFQTDKVVKDLEGKVDAAEVAKATEAKEALQAAIEKNELEEIRAKKDALQEIVQQLTVKLYEQAQAAAGQAEGAEGAQDAGAKKDNVVDAEFEEVKEDK.

A Phosphothreonine; by autocatalysis modification is found at threonine 173. Over residues 577 to 592 the composition is skewed to low complexity; it reads QAAAGQAEGAEGAQDA. The disordered stretch occupies residues 577-598; sequence QAAAGQAEGAEGAQDAGAKKDN.

Belongs to the heat shock protein 70 family.

In terms of biological role, acts as a chaperone. This chain is Chaperone protein DnaK, found in Bacillus anthracis (strain A0248).